A 406-amino-acid chain; its full sequence is Acetate kinase (406 aa).

Asn7 contacts Mg(2+). An ATP-binding site is contributed by Lys14. Arg90 contributes to the substrate binding site. The active-site Proton donor/acceptor is the Asp147. Residues 207 to 211 (HLGNG), 283 to 285 (DMR), and 331 to 335 (GVGEN) each bind ATP. Mg(2+) is bound at residue Glu385.

Belongs to the acetokinase family. Homodimer. Requires Mg(2+) as cofactor. It depends on Mn(2+) as a cofactor.

It localises to the cytoplasm. The enzyme catalyses acetate + ATP = acetyl phosphate + ADP. Its pathway is metabolic intermediate biosynthesis; acetyl-CoA biosynthesis; acetyl-CoA from acetate: step 1/2. Functionally, catalyzes the formation of acetyl phosphate from acetate and ATP. Can also catalyze the reverse reaction. This Fervidobacterium nodosum (strain ATCC 35602 / DSM 5306 / Rt17-B1) protein is Acetate kinase.